Reading from the N-terminus, the 700-residue chain is Acyl-coenzyme A oxidase 2 (700 aa).

This sequence belongs to the acyl-CoA oxidase family. In terms of assembly, heteropentamer composed of five different subunits. FAD is required as a cofactor.

Its subcellular location is the peroxisome. The enzyme catalyses a 2,3-saturated acyl-CoA + O2 = a (2E)-enoyl-CoA + H2O2. It functions in the pathway lipid metabolism; peroxisomal fatty acid beta-oxidation. In terms of biological role, oxidizes strain chain acyl-CoAs with a chain length of 10 to 14 carbons. Also active toward the 2S isomers of acyl-CoA-esters containing a 2-methyl group. The sequence is that of Acyl-coenzyme A oxidase 2 (POX2) from Yarrowia lipolytica (strain CLIB 122 / E 150) (Yeast).